We begin with the raw amino-acid sequence, 594 residues long: Chondroitin sulfate proteoglycan 5 (594 aa).

Over residues 1–12 (MGVGGTSASDTA) the composition is skewed to polar residues. The signal sequence occupies residues 1-18 (MGVGGTSASDTALSLCPT). Disordered regions lie at residues 1-325 (MGVG…PWGL) and 343-418 (TTSF…SECR). Residues 19 to 481 (APEWPPRNGS…AIVTDFQVLC (463 aa)) are Extracellular-facing. N-linked (GlcNAc...) asparagine glycans are attached at residues N26 and N44. The span at 140–181 (SPGLGLSSPGPNLGLPSLDLPNPNLGLPDPNLGLPNPSLGLP) shows a compositional bias: low complexity. Pro residues-rich tracts occupy residues 182 to 195 (SPGP…PNPN) and 219 to 229 (IPLPSPSPGPG). Over residues 248-259 (PQPSSSPAPAQR) the composition is skewed to low complexity. Positions 298-310 (GGHGPGGGHGAGG) are enriched in gly residues. Positions 338–377 (ADFYPTTSFYAEGDDDAEEELEEDEEEEEEEDGGLEDENG) are interaction with TNC and TNR. Residues 349 to 375 (EGDDDAEEELEEDEEEEEEEDGGLEDE) show a composition bias toward acidic residues. N413 and N425 each carry an N-linked (GlcNAc...) asparagine glycan. The 43-residue stretch at 429–471 (RSVCDLVPSYCHNGGQCYLVESHGAFCRCNTQDYTWHKGTRCE) folds into the EGF-like domain. 3 cysteine pairs are disulfide-bonded: C432–C445, C439–C455, and C457–C470. A helical membrane pass occupies residues 482 to 502 (VAVGSAALVLLLLFMLTVFFA). At 503-594 (KKLYLLKTEN…GVPCLHNNLG (92 aa)) the chain is on the cytoplasmic side. The tract at residues 535–594 (TIAEGSHPNDDPGAPHKLQDPLKPGLKDEEPLSILSTAPEEGSKGEPGGCGVPCLHNNLG) is disordered. A compositionally biased stretch (basic and acidic residues) spans 541–564 (HPNDDPGAPHKLQDPLKPGLKDEE).

As to quaternary structure, binds TNC and TNR. The 80 kDa form but not the 140 kDa form can bind TNC and TNR when expressed at the cell surface. In terms of processing, different forms exist: the 140 kDa form (also reported as 130 kDa), which probably consists of the entire protein, and the 38 and 80 kDa forms, which are probably cleaved in their N-terminus. Increase in synaptic activity, results in shedding of the extracellular domain and expression at the cell surface of a 38 kDa form. A form of 200 kDa has also been reported, which is probably hyperglycosylated. N-glycosylated. Post-translationally, O-glycosylated; contains chondroitin sulfate glycans. Part-time proteoglycan, the 200 kDa form is the only one containing chondroitin sulfate glycans. Expressed in astroglial and neuronal surfaces in different parts of the embryonic brain. Expressed in adult brain and retina (at protein level).

Its subcellular location is the cell membrane. May function as a growth and differentiation factor involved in neuritogenesis and more particularly in neurite extension. This is Chondroitin sulfate proteoglycan 5 (CSPG5) from Gallus gallus (Chicken).